Consider the following 304-residue polypeptide: Putative S-adenosyl-L-methionine-dependent methyltransferase MAV_4236 (304 aa).

S-adenosyl-L-methionine contacts are provided by residues aspartate 129 and 158–159 (DL).

The protein belongs to the UPF0677 family.

Its function is as follows. Exhibits S-adenosyl-L-methionine-dependent methyltransferase activity. This is Putative S-adenosyl-L-methionine-dependent methyltransferase MAV_4236 from Mycobacterium avium (strain 104).